We begin with the raw amino-acid sequence, 84 residues long: Small ribosomal subunit protein bS16c (84 aa).

It belongs to the bacterial ribosomal protein bS16 family.

Its subcellular location is the plastid. It localises to the chloroplast. The protein is Small ribosomal subunit protein bS16c of Anthoceros angustus (Hornwort).